The chain runs to 262 residues: Snake venom serine proteinase 9 (262 aa).

The signal sequence occupies residues 1–18; that stretch reads MVLIRVLANLLILQLSYA. A propeptide spanning residues 19-24 is cleaved from the precursor; sequence QKSSEL. A Peptidase S1 domain is found at 25–253; it reads VIGGDECNID…HLDWIQSIIA (229 aa). Cystine bridges form between Cys-31/Cys-165, Cys-52/Cys-68, Cys-144/Cys-214, Cys-176/Cys-193, and Cys-204/Cys-229. Catalysis depends on His-67, which acts as the Charge relay system. N-linked (GlcNAc...) asparagine glycosylation occurs at Asn-105. Asp-112 (charge relay system) is an active-site residue. Ser-208 acts as the Charge relay system in catalysis.

Belongs to the peptidase S1 family. Snake venom subfamily. In terms of assembly, monomer. Expressed by the venom gland.

It localises to the secreted. Functionally, snake venom serine protease that may act in the hemostasis system of the prey. The protein is Snake venom serine proteinase 9 of Crotalus adamanteus (Eastern diamondback rattlesnake).